Consider the following 445-residue polypeptide: Glycine--tRNA ligase (445 aa).

The substrate site is built by Arg-97 and Glu-145. ATP is bound by residues 177–179 (RNE), 187–192 (FRTCEF), 262–263 (EV), and 308–311 (GLTR). 192 to 196 (FEQME) contributes to the substrate binding site. Position 304–308 (304–308 (ETSAG)) interacts with substrate.

This sequence belongs to the class-II aminoacyl-tRNA synthetase family. As to quaternary structure, homodimer.

Its subcellular location is the cytoplasm. It carries out the reaction tRNA(Gly) + glycine + ATP = glycyl-tRNA(Gly) + AMP + diphosphate. Catalyzes the attachment of glycine to tRNA(Gly). The chain is Glycine--tRNA ligase from Borreliella burgdorferi (strain ZS7) (Borrelia burgdorferi).